Reading from the N-terminus, the 266-residue chain is MICOS complex subunit MIC27 (266 aa).

The transit peptide at 1 to 27 (MAAIRMGKLTTMPAGLIYASVSVHAAK) directs the protein to the mitochondrion. Topologically, residues 28 to 110 (EEESKKQLVK…YVYMKNPPRD (83 aa)) are mitochondrial intermembrane. Residues 111–129 (FLPKMGVITVSGLAGLVSA) traverse the membrane as a helical segment. The Mitochondrial matrix segment spans residues 130 to 137 (RKGSKFKK). Residues 138 to 155 (ITYPLGLATLGATVCYPV) traverse the membrane as a helical segment. The Mitochondrial intermembrane portion of the chain corresponds to 156-266 (QSVIIAKVTA…NVTNSGVLRI (111 aa)). Serine 204 is subject to Phosphoserine.

Belongs to the apolipoprotein O/MICOS complex subunit Mic27 family. As to quaternary structure, component of the mitochondrial contact site and cristae organizing system (MICOS) complex, composed of at least MICOS10/MIC10, CHCHD3/MIC19, CHCHD6/MIC25, APOOL/MIC27, IMMT/MIC60, APOO/MIC23/MIC26 and MICOS13/MIC13. This complex was also known under the names MINOS or MitOS complex. The MICOS complex associates with mitochondrial outer membrane proteins SAMM50, MTX1 and MTX2 (together described as components of the mitochondrial outer membrane sorting assembly machinery (SAM) complex) and DNAJC11, mitochondrial inner membrane protein TMEM11 and with HSPA9. The MICOS and SAM complexes together with DNAJC11 are part of a large protein complex spanning both membranes termed the mitochondrial intermembrane space bridging (MIB) complex. Interacts with MICOS10/MIC10, IMMT/MIC60 and APOO/MIC23/MIC26.

It is found in the mitochondrion inner membrane. The protein resides in the mitochondrion. Functionally, component of the MICOS complex, a large protein complex of the mitochondrial inner membrane that plays crucial roles in the maintenance of crista junctions, inner membrane architecture, and formation of contact sites to the outer membrane. Specifically binds to cardiolipin (in vitro) but not to the precursor lipid phosphatidylglycerol. Plays a crucial role in crista junction formation and mitochondrial function. This Pongo abelii (Sumatran orangutan) protein is MICOS complex subunit MIC27 (APOOL).